Reading from the N-terminus, the 128-residue chain is Peptidyl-prolyl cis-trans isomerase NIMA-interacting 4 (128 aa).

Positions Met-1–Ala-34 are disordered. The PpiC domain maps to Gly-32 to Gly-126.

It belongs to the PpiC/parvulin rotamase family. PIN4 subfamily.

It is found in the nucleus. Its subcellular location is the nucleolus. It localises to the cytoplasm. The protein localises to the cytoskeleton. The protein resides in the spindle. It catalyses the reaction [protein]-peptidylproline (omega=180) = [protein]-peptidylproline (omega=0). Functionally, may be involved as a ribosomal RNA processing factor in ribosome biogenesis. Binds to DNA. The protein is Peptidyl-prolyl cis-trans isomerase NIMA-interacting 4 (pin4) of Danio rerio (Zebrafish).